The sequence spans 310 residues: MIIVTGGAGFIGSNIVKSLNDIGYRDILVVDNLKDGTKFVNLVDLDIADYMDKEDFIASIVAGDDLGDIDAVFHEGACSSTTEWDGKYMMDNNYQYSKDVLHYCLDRNIPFLYASSAATYGGRNDNFIEERQYEQPLNVYGYSKFLFDQYVREILPEAESQICGFRYFNVYGPREGHKGSMASVAFHLNNQINQGENPKLFSGSENFKRDFVYVGDVAAVNLWFWQNGVSGIFNCGTGRAESFQAVADATLAFHKKGGVEYIEFPEKLKGRYQAYTQADLTNLRAAGYDKPFKTVAEGVAEYMAWLNRTV.

Residues F10 to I11, D31 to N32, K38, K53, E75 to S79, and N92 contribute to the NADP(+) site. Y140 serves as the catalytic Proton acceptor. K144 provides a ligand contact to NADP(+). N169 provides a ligand contact to substrate. V170 and K178 together coordinate NADP(+). The active-site Proton acceptor is the K178. Substrate-binding positions include S180, H187, F201 to S204, R209, and Y272.

The protein belongs to the NAD(P)-dependent epimerase/dehydratase family. HldD subfamily. As to quaternary structure, homopentamer. Requires NADP(+) as cofactor.

The catalysed reaction is ADP-D-glycero-beta-D-manno-heptose = ADP-L-glycero-beta-D-manno-heptose. The protein operates within nucleotide-sugar biosynthesis; ADP-L-glycero-beta-D-manno-heptose biosynthesis; ADP-L-glycero-beta-D-manno-heptose from D-glycero-beta-D-manno-heptose 7-phosphate: step 4/4. Its function is as follows. Catalyzes the interconversion between ADP-D-glycero-beta-D-manno-heptose and ADP-L-glycero-beta-D-manno-heptose via an epimerization at carbon 6 of the heptose. The chain is ADP-L-glycero-D-manno-heptose-6-epimerase from Pectobacterium carotovorum subsp. carotovorum (strain PC1).